The following is a 112-amino-acid chain: Large ribosomal subunit protein bL17 (112 aa).

The protein belongs to the bacterial ribosomal protein bL17 family. Part of the 50S ribosomal subunit. Contacts protein L32.

This Desulfitobacterium hafniense (strain DSM 10664 / DCB-2) protein is Large ribosomal subunit protein bL17.